We begin with the raw amino-acid sequence, 596 residues long: Actin-related protein 9 (596 aa).

The tract at residues leucine 148–glutamate 178 is disordered.

It belongs to the actin family. ARP8 subfamily.

This chain is Actin-related protein 9 (ARP9), found in Arabidopsis thaliana (Mouse-ear cress).